Consider the following 156-residue polypeptide: Small ribosomal subunit protein uS7 (156 aa).

The protein belongs to the universal ribosomal protein uS7 family. Part of the 30S ribosomal subunit. Contacts proteins S9 and S11.

In terms of biological role, one of the primary rRNA binding proteins, it binds directly to 16S rRNA where it nucleates assembly of the head domain of the 30S subunit. Is located at the subunit interface close to the decoding center, probably blocks exit of the E-site tRNA. This Thiomonas delicata (Thiomonas cuprina) protein is Small ribosomal subunit protein uS7.